A 115-amino-acid chain; its full sequence is NADH-ubiquinone oxidoreductase chain 3 (115 aa).

3 consecutive transmembrane segments (helical) span residues 4 to 24 (LMIL…AFWL), 55 to 75 (FFLV…LLPL), and 84 to 104 (INMM…GLAY).

Belongs to the complex I subunit 3 family. As to quaternary structure, core subunit of respiratory chain NADH dehydrogenase (Complex I) which is composed of 45 different subunits. Interacts with TMEM186. Interacts with TMEM242.

The protein localises to the mitochondrion inner membrane. The enzyme catalyses a ubiquinone + NADH + 5 H(+)(in) = a ubiquinol + NAD(+) + 4 H(+)(out). Core subunit of the mitochondrial membrane respiratory chain NADH dehydrogenase (Complex I) which catalyzes electron transfer from NADH through the respiratory chain, using ubiquinone as an electron acceptor. Essential for the catalytic activity of complex I. The chain is NADH-ubiquinone oxidoreductase chain 3 from Podomys floridanus (Florida mouse).